Here is a 565-residue protein sequence, read N- to C-terminus: Sulfite reductase [NADPH] hemoprotein beta-component (565 aa).

The [4Fe-4S] cluster site is built by cysteine 429, cysteine 435, cysteine 474, and cysteine 478. Cysteine 478 serves as a coordination point for siroheme.

It belongs to the nitrite and sulfite reductase 4Fe-4S domain family. As to quaternary structure, alpha(8)-beta(8). The alpha component is a flavoprotein, the beta component is a hemoprotein. Requires siroheme as cofactor. The cofactor is [4Fe-4S] cluster.

It carries out the reaction hydrogen sulfide + 3 NADP(+) + 3 H2O = sulfite + 3 NADPH + 4 H(+). Its pathway is sulfur metabolism; hydrogen sulfide biosynthesis; hydrogen sulfide from sulfite (NADPH route): step 1/1. In terms of biological role, component of the sulfite reductase complex that catalyzes the 6-electron reduction of sulfite to sulfide. This is one of several activities required for the biosynthesis of L-cysteine from sulfate. The polypeptide is Sulfite reductase [NADPH] hemoprotein beta-component (Shewanella pealeana (strain ATCC 700345 / ANG-SQ1)).